A 362-amino-acid polypeptide reads, in one-letter code: Dihydroorotate dehydrogenase (quinone) (362 aa).

Residues 62–66 and Thr86 each bind FMN; that span reads AGYDK. Lys66 is a binding site for substrate. 111 to 115 is a substrate binding site; it reads NRLGF. The FMN site is built by Asn139 and Asn170. Residue Asn170 participates in substrate binding. The active-site Nucleophile is Ser173. Asn175 contacts substrate. Positions 215 and 243 each coordinate FMN. 244–245 is a binding site for substrate; it reads NT. Residues Gly266, Gly295, and 316 to 317 contribute to the FMN site; that span reads YS.

Belongs to the dihydroorotate dehydrogenase family. Type 2 subfamily. As to quaternary structure, monomer. Requires FMN as cofactor.

It localises to the cell membrane. It catalyses the reaction (S)-dihydroorotate + a quinone = orotate + a quinol. Its pathway is pyrimidine metabolism; UMP biosynthesis via de novo pathway; orotate from (S)-dihydroorotate (quinone route): step 1/1. In terms of biological role, catalyzes the conversion of dihydroorotate to orotate with quinone as electron acceptor. The polypeptide is Dihydroorotate dehydrogenase (quinone) (Rhizobium johnstonii (strain DSM 114642 / LMG 32736 / 3841) (Rhizobium leguminosarum bv. viciae)).